Consider the following 1722-residue polypeptide: Lymphocyte antigen 75 (1722 aa).

The signal sequence occupies residues 1–27 (MGTRRVTPGCAAGLLVLLLRCFGLAEP). The Extracellular portion of the chain corresponds to 28-1666 (SEFSGDDSFT…VVCKVPLSPD (1639 aa)). The Ricin B-type lectin domain occupies 32 to 182 (GDDSFTIVNE…FLVGETWHHD (151 aa)). N135 carries an N-linked (GlcNAc...) asparagine glycan. Positions 164 to 211 (SYGRPCEFPFLVGETWHHDCIRDENHSGPWCATTLNYEYDQKWGICLK) constitute a Fibronectin type-II domain. 4 cysteine pairs are disulfide-bonded: C169–C194, C183–C209, C247–C340, and C317–C332. In terms of domain architecture, C-type lectin 1 spans 225–341 (QIGSCYQFNN…CEAQQPYVCK (117 aa)). N-linked (GlcNAc...) asparagine glycosylation is found at N345 and N377. C-type lectin domains follow at residues 368 to 486 (QNGF…YVCK), 493 to 625 (NDTR…ICKK), and 652 to 791 (SNLS…WVCQ). Intrachain disulfides connect C389-C485 and C462-C477. A glycan (N-linked (GlcNAc...) asparagine) is linked at N529. Intrachain disulfides connect C597–C614, C678–C790, and C752–C782. N-linked (GlcNAc...) asparagine glycans are attached at residues N843 and N865. A Phosphotyrosine modification is found at Y933. N934 and N1076 each carry an N-linked (GlcNAc...) asparagine glycan. C-type lectin domains lie at 958–1091 (FQNK…LCQK) and 1110–1222 (YLNN…ICYY). Cystine bridges form between C1060–C1080 and C1197–C1211. Residues N1225, N1320, and N1392 are each glycosylated (N-linked (GlcNAc...) asparagine). Positions 1251–1374 (FQNSCYNFMI…VIDETLHFYQ (124 aa)) constitute a C-type lectin 7 domain. 2 consecutive C-type lectin domains span residues 1401-1513 (YEDG…ICYK) and 1542-1661 (YGDH…VCKV). A disulfide bond links C1488 and C1502. N-linked (GlcNAc...) asparagine glycans are attached at residues N1593 and N1626. A disulfide bond links C1635 and C1650. The chain crosses the membrane as a helical span at residues 1667 to 1691 (YRGIAVLFAVLSVLALISGLIWFLV). Residues 1692–1722 (QRNHFRWTGLSSVRYEHGANEDEVMLPSFHD) lie on the Cytoplasmic side of the membrane. Phosphoserine occurs at positions 1703 and 1719.

In terms of tissue distribution, expressed in the thymus and cultured bone marrow cells.

The protein resides in the membrane. Its function is as follows. Acts as an endocytic receptor to direct captured antigens from the extracellular space to a specialized antigen-processing compartment. Causes reduced proliferation of B lymphocytes. This is Lymphocyte antigen 75 (LY75) from Mesocricetus auratus (Golden hamster).